The following is a 3424-amino-acid chain: Genome polyprotein (3424 aa).

The segment at 2-15 (SKKPGKSAAKRTVN) is interaction with host EXOC1. The Cytoplasmic segment spans residues 2–101 (SKKPGKSAAK…SVNKRKEKKK (100 aa)). The tract at residues 35–70 (MLDVRGAPRLILALMAFFRFAAIKPTLGLKKRWRSV) is hydrophobic; homodimerization of capsid protein C. A propeptide spans 102–118 (SFSTALLWITMITAVAG) (ER anchor for the capsid protein C, removed in mature form by serine protease NS3). A helical membrane pass occupies residues 102-122 (SFSTALLWITMITAVAGLKIS). Over 123–244 (SHRDRPLLMV…TTKYLTKVEN (122 aa)) the chain is Extracellular. Asparagine 133 carries an N-linked (GlcNAc...) asparagine; by host glycan. The chain crosses the membrane as a helical span at residues 245 to 265 (WVIRNPGYALVALATAWMLGS). Topologically, residues 266 to 270 (NTPQR) are cytoplasmic. A helical transmembrane segment spans residues 271–285 (VVFMIMMMLIAPAYS). Residues 286-738 (LNCLGISNRD…GVFGTAFRSL (453 aa)) are Extracellular-facing. 8 disulfides stabilise this stretch: cysteine 288/cysteine 315, cysteine 345/cysteine 401, cysteine 345/cysteine 406, cysteine 359/cysteine 390, cysteine 377/cysteine 401, cysteine 377/cysteine 406, cysteine 475/cysteine 573, and cysteine 590/cysteine 621. Positions 383-396 (DRGWGNGCGLFGKG) are fusion peptide. Residues 739-759 (FGGMSWVTQALMGALLLWLGI) traverse the membrane as a helical segment. Over 760-765 (SARERT) the chain is Cytoplasmic. A helical membrane pass occupies residues 766–786 (VSLIMLSVGGILLFLAVNVHA). The Extracellular segment spans residues 787 to 1170 (DTGCAIDMAR…EVLRRRWTAN (384 aa)). Disulfide bonds link cysteine 790–cysteine 801, cysteine 841–cysteine 929, cysteine 965–cysteine 1009, cysteine 1067–cysteine 1116, cysteine 1078–cysteine 1099, cysteine 1078–cysteine 1100, cysteine 1099–cysteine 1103, and cysteine 1100–cysteine 1103. Residues asparagine 916 and asparagine 993 are each glycosylated (N-linked (GlcNAc...) asparagine; by host). A helical transmembrane segment spans residues 1171-1191 (LALPTSALLMACFIFGGFTYL). Topologically, residues 1192 to 1213 (DLFRYFILVGAAFAEANSGGDV) are cytoplasmic. A helical membrane pass occupies residues 1214–1234 (VHLAMIAAFNIQPVALVTTFF). At 1235 to 1276 (RKNWTNRENMILIIAAACTQMACMELKIELFHVMNSLSLAWM) the chain is on the lumenal side. Residues 1277 to 1297 (ILKALTTGTTSTLAMPFLAAL) form a helical membrane-spanning segment. Residues 1298-1302 (SPPMN) lie on the Cytoplasmic side of the membrane. Residues 1303 to 1323 (WLGLDVVRCLLIMAGVAALIS) form a helical membrane-spanning segment. The Lumenal portion of the chain corresponds to 1324 to 1333 (ERRESLAKKK). A helical membrane pass occupies residues 1334–1354 (GALLISAALALTGAFSPLVLQ). Residues 1355 to 1367 (GALMFTQSLGKRG) lie on the Cytoplasmic side of the membrane. The chain crosses the membrane as a helical span at residues 1368–1388 (WPASEVLTAVGMTFALAGSVA). Topologically, residues 1389 to 1391 (RLD) are lumenal. The helical transmembrane segment at 1392–1412 (GGTMAIPLATMAILAVAYVLS) threads the bilayer. The Cytoplasmic segment spans residues 1413–1469 (GKSTDMWLERCADISWINEAEITGTSPRLDVELDSNGDFKMINDPGVPMWMWTCRMG). The interacts with and activates NS3 protease stretch occupies residues 1420 to 1459 (LERCADISWINEAEITGTSPRLDVELDSNGDFKMINDPGV). The helical intramembrane region spans 1470-1490 (LMAMAAYNPVLIPVSMAGYWM). Topologically, residues 1491 to 2167 (TVKIHKRGGV…ALEELPDTVE (677 aa)) are cytoplasmic. Residues 1498–1675 (GGVMWDVPAP…ERQEEETPEA (178 aa)) form the Peptidase S7 domain. Residues histidine 1548, aspartate 1572, and serine 1632 each act as charge relay system; for serine protease NS3 activity in the active site. The Helicase ATP-binding domain occupies 1678-1834 (PDMLKKRRLT…DSNAPIIDQE (157 aa)). Residues 1682–1685 (KKRR) form an important for RNA-binding region. 1691 to 1698 (LHPGAGKT) is an ATP binding site. Residues 1782–1785 (DEAH) carry the DEAH box motif. The region spanning 1845–2009 (GFEWITEYTG…GLVAQLYGPE (165 aa)) is the Helicase C-terminal domain. Residue lysine 1886 is modified to N6-acetyllysine; by host. Residues 1944 to 1969 (APITPASAAQRRGRIGRDPTQSGDEY) are disordered. Positions 2160 to 2164 (EELPD) are regulates the ATPase activity of NS3 helicase. A helical transmembrane segment spans residues 2168-2188 (TILLMTMMCVASLGMFTLMVH). Residues 2189 to 2190 (RR) lie on the Lumenal side of the membrane. The helical intramembrane region spans 2191–2211 (GLGKTGLGTLVLATVTVLLWI). Residues 2212–2213 (SD) lie on the Lumenal side of the membrane. The chain crosses the membrane as a helical span at residues 2214-2234 (VPAPKIAGVLLIAFLLMIVLI). The Cytoplasmic segment spans residues 2235–2249 (PEPEKQRSQTDNHLA). The helical transmembrane segment at 2250–2264 (IFLVCVLLLIGAVSA) threads the bilayer. Residues 2265-2299 (NEMGWLETTKKDIGKLFRSSGDTQEQSTWQSWAPE) are Lumenal-facing. Residues 2300-2320 (VRAATAWAGYAGLTVFLTPLF) constitute an intramembrane region (helical). Over 2321–2342 (RHLITTQYVSFSLTAITAQASA) the chain is Lumenal. A helical membrane pass occupies residues 2343-2363 (LFGLSAGYPFVGIDLAVGFLL). The Cytoplasmic segment spans residues 2364–2371 (LGCYGQYN). A helical membrane pass occupies residues 2372-2392 (LPTAVATGLLLLAHYGYMIPG). Residues 2393 to 2439 (WQAEAMRAAQKRTAAGVMKNAVVDGIVATDIPEVDTATPITEKKLGQ) lie on the Lumenal side of the membrane. The chain crosses the membrane as a helical span at residues 2440 to 2460 (ILLILLCGASLLVKFDTMVLV). Residues 2461–3424 (EAGVLTTSAM…PSPVLFTGAI (964 aa)) lie on the Cytoplasmic side of the membrane. One can recognise an mRNA cap 0-1 NS5-type MT domain in the interval 2520 to 2784 (GGGSAPTLGE…DVCLGSGTRA (265 aa)). An S-adenosyl-L-methionine-binding site is contributed by serine 2575. Serine 2575 is subject to Phosphoserine. Lysine 2580 acts as the For 2'-O-MTase activity in catalysis. The S-adenosyl-L-methionine site is built by glycine 2605, tryptophan 2606, threonine 2623, lysine 2624, aspartate 2650, and valine 2651. The For 2'-O-MTase activity role is filled by aspartate 2665. Isoleucine 2666 lines the S-adenosyl-L-methionine pocket. Catalysis depends on for 2'-O-MTase activity residues lysine 2700 and glutamate 2736. Tyrosine 2738 serves as a coordination point for S-adenosyl-L-methionine. Residues glutamate 2958, histidine 2962, cysteine 2967, and cysteine 2970 each contribute to the Zn(2+) site. Residues 3048–3200 (GNMFADDTAG…KPIDDRFASA (153 aa)) enclose the RdRp catalytic domain. 3 residues coordinate Zn(2+): histidine 3235, cysteine 3251, and cysteine 3370.

The protein in the N-terminal section; belongs to the class I-like SAM-binding methyltransferase superfamily. mRNA cap 0-1 NS5-type methyltransferase family. Homodimer. Interacts (via N-terminus) with host EXOC1 (via C-terminus); this interaction results in EXOC1 degradation through the proteasome degradation pathway. As to quaternary structure, forms heterodimers with envelope protein E in the endoplasmic reticulum and Golgi. In terms of assembly, homodimer; in the endoplasmic reticulum and Golgi. Interacts with protein prM. Interacts with non-structural protein 1. Homodimer; Homohexamer when secreted. Interacts with envelope protein E. NS1 interacts with NS4B. Interacts with host complement protein CFH; this interaction leads to the degradation of C3. As to quaternary structure, interacts (via N-terminus) with serine protease NS3. In terms of assembly, forms a heterodimer with serine protease NS3. May form homooligomers. Forms a heterodimer with NS2B. Interacts with non-structural protein 2A (via N-terminus). Interacts with NS4B. Interacts with unphosphorylated RNA-directed RNA polymerase NS5; this interaction stimulates RNA-directed RNA polymerase NS5 guanylyltransferase activity. As to quaternary structure, interacts with serine protease NS3. In terms of assembly, homodimer. Interacts with host STAT2; this interaction inhibits the phosphorylation of the latter, and, when all viral proteins are present (polyprotein), targets STAT2 for degradation. Interacts with serine protease NS3. Post-translationally, specific enzymatic cleavages in vivo yield mature proteins. Cleavages in the lumen of endoplasmic reticulum are performed by host signal peptidase, whereas cleavages in the cytoplasmic side are performed by serine protease NS3. Signal cleavage at the 2K-4B site requires a prior NS3 protease-mediated cleavage at the 4A-2K site. In terms of processing, cleaved in post-Golgi vesicles by a host furin, releasing the mature small envelope protein M, and peptide pr. This cleavage is incomplete as up to 30% of viral particles still carry uncleaved prM. N-glycosylated. Post-translationally, N-glycosylated. The excreted form is glycosylated and this is required for efficient secretion of the protein from infected cells. In terms of processing, acetylated by host KAT5. Acetylation modulates NS3 RNA-binding and unwinding activities and plays an important positive role for viral replication. Phosphorylated on serines residues. This phosphorylation may trigger NS5 nuclear localization.

The protein localises to the virion. It is found in the host nucleus. It localises to the host cytoplasm. Its subcellular location is the host perinuclear region. The protein resides in the secreted. The protein localises to the virion membrane. It is found in the host endoplasmic reticulum membrane. It catalyses the reaction Selective hydrolysis of -Xaa-Xaa-|-Yaa- bonds in which each of the Xaa can be either Arg or Lys and Yaa can be either Ser or Ala.. It carries out the reaction RNA(n) + a ribonucleoside 5'-triphosphate = RNA(n+1) + diphosphate. The catalysed reaction is a ribonucleoside 5'-triphosphate + H2O = a ribonucleoside 5'-diphosphate + phosphate + H(+). The enzyme catalyses ATP + H2O = ADP + phosphate + H(+). It catalyses the reaction a 5'-end (5'-triphosphoguanosine)-ribonucleoside in mRNA + S-adenosyl-L-methionine = a 5'-end (N(7)-methyl 5'-triphosphoguanosine)-ribonucleoside in mRNA + S-adenosyl-L-homocysteine. It carries out the reaction a 5'-end (N(7)-methyl 5'-triphosphoguanosine)-ribonucleoside in mRNA + S-adenosyl-L-methionine = a 5'-end (N(7)-methyl 5'-triphosphoguanosine)-(2'-O-methyl-ribonucleoside) in mRNA + S-adenosyl-L-homocysteine + H(+). Its function is as follows. Plays a role in virus budding by binding to the cell membrane and gathering the viral RNA into a nucleocapsid that forms the core of a mature virus particle. During virus entry, may induce genome penetration into the host cytoplasm after hemifusion induced by the surface proteins. Can migrate to the cell nucleus where it modulates host functions. Overcomes the anti-viral effects of host EXOC1 by sequestering and degrading the latter through the proteasome degradation pathway. Functionally, inhibits RNA silencing by interfering with host Dicer. In terms of biological role, prevents premature fusion activity of envelope proteins in trans-Golgi by binding to envelope protein E at pH6.0. After virion release in extracellular space, gets dissociated from E dimers. Acts as a chaperone for envelope protein E during intracellular virion assembly by masking and inactivating envelope protein E fusion peptide. prM is the only viral peptide matured by host furin in the trans-Golgi network probably to avoid catastrophic activation of the viral fusion activity in acidic Golgi compartment prior to virion release. prM-E cleavage is inefficient, and many virions are only partially matured. These uncleaved prM would play a role in immune evasion. Its function is as follows. May play a role in virus budding. Exerts cytotoxic effects by activating a mitochondrial apoptotic pathway through M ectodomain. May display a viroporin activity. Functionally, binds to host cell surface receptor and mediates fusion between viral and cellular membranes. Envelope protein is synthesized in the endoplasmic reticulum in the form of heterodimer with protein prM. They play a role in virion budding in the ER, and the newly formed immature particle is covered with 60 spikes composed of heterodimer between precursor prM and envelope protein E. The virion is transported to the Golgi apparatus where the low pH causes dissociation of PrM-E heterodimers and formation of E homodimers. prM-E cleavage is inefficient, and many virions are only partially matured. These uncleaved prM would play a role in immune evasion. In terms of biological role, involved in immune evasion, pathogenesis and viral replication. Once cleaved off the polyprotein, is targeted to three destinations: the viral replication cycle, the plasma membrane and the extracellular compartment. Essential for viral replication. Required for formation of the replication complex and recruitment of other non-structural proteins to the ER-derived membrane structures. Excreted as a hexameric lipoparticle that plays a role against host immune response. Antagonizing the complement function. Binds to the host macrophages and dendritic cells. Inhibits signal transduction originating from Toll-like receptor 3 (TLR3). Component of the viral RNA replication complex that functions in virion assembly and antagonizes the host alpha/beta interferon antiviral response. Its function is as follows. Required cofactor for the serine protease function of NS3. May have membrane-destabilizing activity and form viroporins. Functionally, displays three enzymatic activities: serine protease, NTPase and RNA helicase. NS3 serine protease, in association with NS2B, performs its autocleavage and cleaves the polyprotein at dibasic sites in the cytoplasm: C-prM, NS2A-NS2B, NS2B-NS3, NS3-NS4A, NS4A-2K and NS4B-NS5. NS3 RNA helicase binds RNA and unwinds dsRNA in the 3' to 5' direction. In terms of biological role, regulates the ATPase activity of the NS3 helicase activity. NS4A allows NS3 helicase to conserve energy during unwinding. Functions as a signal peptide for NS4B and is required for the interferon antagonism activity of the latter. Its function is as follows. Induces the formation of ER-derived membrane vesicles where the viral replication takes place. Inhibits interferon (IFN)-induced host STAT1 phosphorylation and nuclear translocation, thereby preventing the establishment of cellular antiviral state by blocking the IFN-alpha/beta pathway. Inhibits STAT2 translocation in the nucleus after IFN-alpha treatment. Functionally, replicates the viral (+) and (-) RNA genome, and performs the capping of genomes in the cytoplasm. NS5 methylates viral RNA cap at guanine N-7 and ribose 2'-O positions. Besides its role in RNA genome replication, also prevents the establishment of cellular antiviral state by blocking the interferon-alpha/beta (IFN-alpha/beta) signaling pathway. Inhibits host TYK2 and STAT2 phosphorylation, thereby preventing activation of JAK-STAT signaling pathway. In Aedes sp. (Human), this protein is Genome polyprotein.